The primary structure comprises 465 residues: Cysteine--tRNA ligase (465 aa).

C27 serves as a coordination point for Zn(2+). The 'HIGH' region signature appears at 29-39 (PTVYDDAHLGH). Zn(2+) is bound by residues C207, H237, and E241. Residues 269-273 (KMSKS) carry the 'KMSKS' region motif. An ATP-binding site is contributed by K272.

Belongs to the class-I aminoacyl-tRNA synthetase family. As to quaternary structure, monomer. Zn(2+) is required as a cofactor.

The protein localises to the cytoplasm. It catalyses the reaction tRNA(Cys) + L-cysteine + ATP = L-cysteinyl-tRNA(Cys) + AMP + diphosphate. In Helicobacter pylori (strain P12), this protein is Cysteine--tRNA ligase.